Reading from the N-terminus, the 407-residue chain is Peptidase T (407 aa).

H81 provides a ligand contact to Zn(2+). Residue D83 is part of the active site. Residue D142 coordinates Zn(2+). The active-site Proton acceptor is the E176. Zn(2+) is bound by residues E177, D199, and H381.

This sequence belongs to the peptidase M20B family. The cofactor is Zn(2+).

The protein localises to the cytoplasm. It catalyses the reaction Release of the N-terminal residue from a tripeptide.. Functionally, cleaves the N-terminal amino acid of tripeptides. The chain is Peptidase T from Streptococcus pneumoniae (strain P1031).